The following is a 475-amino-acid chain: MSPKTETKASVGFKAGVKDYRLTYYTPEYETKETDILAAFRVTPQPGVPPEEAGAAVAAESSTGTWTTVWTDGLTSLDRYKGRCYHIEPVAGEENQYIAYVAYPLDLFEEGSVTNMFTSIVGNVFGFKALRALRLEDLRIPPAYSKTFQGPPHGIQVERDKLNKYGRPLLGCTIKPKLGLSAKNYGRAVYECLRGGLDFTKDDENVNSQPFMRWRDRFVFCAEAIYKAQAETGEIKGHYLNATAGTCEEMIKRAVFARELGVPIVMHDYLTGGFTANTSLAHYCRDNGLLLHIHRAMHAVIDRQRNHGMHFRVLAKALRMSGGDHIHAGTVVGKLEGERDVTLGFVDLLRDDFIEKDRSRGIYFTQDWVSMPGVLPVASGGIHVWHMPALTEIFGDDSVLQFGGGTLGHPWGNAPGAVANRVALEACVQARNEGRDLAREGNEVIREASKWSPELAAACEVWREIKFEFEAMDVL.

Residues 1-2 constitute a propeptide that is removed on maturation; the sequence is MS. N-acetylproline is present on Pro-3. At Lys-14 the chain carries N6,N6,N6-trimethyllysine. Substrate is bound by residues Asn-123 and Thr-173. Lys-175 acts as the Proton acceptor in catalysis. Lys-177 is a binding site for substrate. Residues Lys-201, Asp-203, and Glu-204 each coordinate Mg(2+). Lys-201 bears the N6-carboxylysine mark. His-294 acts as the Proton acceptor in catalysis. 3 residues coordinate substrate: Arg-295, His-327, and Ser-379.

It belongs to the RuBisCO large chain family. Type I subfamily. As to quaternary structure, heterohexadecamer of 8 large chains and 8 small chains; disulfide-linked. The disulfide link is formed within the large subunit homodimers. Mg(2+) is required as a cofactor. In terms of processing, the disulfide bond which can form in the large chain dimeric partners within the hexadecamer appears to be associated with oxidative stress and protein turnover.

Its subcellular location is the plastid. The protein localises to the chloroplast. It catalyses the reaction 2 (2R)-3-phosphoglycerate + 2 H(+) = D-ribulose 1,5-bisphosphate + CO2 + H2O. It carries out the reaction D-ribulose 1,5-bisphosphate + O2 = 2-phosphoglycolate + (2R)-3-phosphoglycerate + 2 H(+). In terms of biological role, ruBisCO catalyzes two reactions: the carboxylation of D-ribulose 1,5-bisphosphate, the primary event in carbon dioxide fixation, as well as the oxidative fragmentation of the pentose substrate in the photorespiration process. Both reactions occur simultaneously and in competition at the same active site. This Illicium oligandrum (Star anise) protein is Ribulose bisphosphate carboxylase large chain.